The chain runs to 48 residues: U-reduvitoxin-Pr5a (48 aa).

The N-terminal stretch at 1 to 19 is a signal peptide; it reads MRLFLIFTFIVASLASVYG. 3 cysteine pairs are disulfide-bonded: cysteine 20–cysteine 34, cysteine 27–cysteine 39, and cysteine 33–cysteine 44.

This sequence belongs to the venom Ptu1-like knottin family. Expressed by the venom gland.

Its subcellular location is the secreted. In terms of biological role, binds reversibly and blocks P/Q-type voltage-gated calcium channels (Cav). The polypeptide is U-reduvitoxin-Pr5a (Platymeris rhadamanthus (Red spot assassin bug)).